The primary structure comprises 246 residues: Small ribosomal subunit protein uS2 (246 aa).

Residues 226–246 (QGEEEAEVAEETAPETETTTA) form a disordered region. A compositionally biased stretch (acidic residues) spans 229–239 (EEAEVAEETAP).

The protein belongs to the universal ribosomal protein uS2 family. Part of the 30S ribosomal subunit. Interacts with BrxC.

This Bacillus subtilis (strain 168) protein is Small ribosomal subunit protein uS2 (rpsB).